The chain runs to 193 residues: dTTP/UTP pyrophosphatase (193 aa).

The active-site Proton acceptor is the Asp70.

It belongs to the Maf family. YhdE subfamily. Requires a divalent metal cation as cofactor.

The protein localises to the cytoplasm. The enzyme catalyses dTTP + H2O = dTMP + diphosphate + H(+). The catalysed reaction is UTP + H2O = UMP + diphosphate + H(+). Its function is as follows. Nucleoside triphosphate pyrophosphatase that hydrolyzes dTTP and UTP. May have a dual role in cell division arrest and in preventing the incorporation of modified nucleotides into cellular nucleic acids. This chain is dTTP/UTP pyrophosphatase, found in Alcanivorax borkumensis (strain ATCC 700651 / DSM 11573 / NCIMB 13689 / SK2).